The chain runs to 200 residues: Pyridoxamine 5'-phosphate oxidase homolog (200 aa).

3 residues coordinate FMN: phenylalanine 60, lysine 68, and asparagine 125.

The protein belongs to the pyridoxamine 5'-phosphate oxidase family. The cofactor is FMN.

The protein localises to the cytoplasm. It localises to the nucleus. In Saccharomyces cerevisiae (strain ATCC 204508 / S288c) (Baker's yeast), this protein is Pyridoxamine 5'-phosphate oxidase homolog.